A 451-amino-acid chain; its full sequence is ATP synthase subunit beta (451 aa).

143–150 (GGAGVGKT) contributes to the ATP binding site.

It belongs to the ATPase alpha/beta chains family. As to quaternary structure, F-type ATPases have 2 components, CF(1) - the catalytic core - and CF(0) - the membrane proton channel. CF(1) has five subunits: alpha(3), beta(3), gamma(1), delta(1), epsilon(1). CF(0) has three main subunits: a(1), b(2) and c(9-12). The alpha and beta chains form an alternating ring which encloses part of the gamma chain. CF(1) is attached to CF(0) by a central stalk formed by the gamma and epsilon chains, while a peripheral stalk is formed by the delta and b chains.

The protein localises to the cell membrane. The enzyme catalyses ATP + H2O + 4 H(+)(in) = ADP + phosphate + 5 H(+)(out). Functionally, produces ATP from ADP in the presence of a proton gradient across the membrane. The catalytic sites are hosted primarily by the beta subunits. This Coprothermobacter proteolyticus (strain ATCC 35245 / DSM 5265 / OCM 4 / BT) protein is ATP synthase subunit beta.